We begin with the raw amino-acid sequence, 289 residues long: Digeranylgeranylglyceryl phosphate synthase (289 aa).

8 helical membrane-spanning segments follow: residues 18–38 (LMAGFAAAIGTLIAFNILISG), 47–67 (AFPFLDAGLVFLVVFLVSGAG), 99–119 (FYFSYLLFALGTLIAFSINSI), 120–140 (CGSIALFNSLLLILYAKTLKG), 163–183 (IFGFGGIKALSVLFLLAALAI), 218–238 (LAVLTGLLAVILSPLPYFMSV), 243–263 (YIYLVSLADLGFLAAIIQLLV), and 269–289 (KSSKLFKIAMFFALIAFIAGV).

The protein belongs to the UbiA prenyltransferase family. DGGGP synthase subfamily. It depends on Mg(2+) as a cofactor.

Its subcellular location is the cell membrane. It carries out the reaction sn-3-O-(geranylgeranyl)glycerol 1-phosphate + (2E,6E,10E)-geranylgeranyl diphosphate = 2,3-bis-O-(geranylgeranyl)-sn-glycerol 1-phosphate + diphosphate. It functions in the pathway membrane lipid metabolism; glycerophospholipid metabolism. Functionally, prenyltransferase that catalyzes the transfer of the geranylgeranyl moiety of geranylgeranyl diphosphate (GGPP) to the C2 hydroxyl of (S)-3-O-geranylgeranylglyceryl phosphate (GGGP). This reaction is the second ether-bond-formation step in the biosynthesis of archaeal membrane lipids. The protein is Digeranylgeranylglyceryl phosphate synthase of Methanosarcina mazei (strain ATCC BAA-159 / DSM 3647 / Goe1 / Go1 / JCM 11833 / OCM 88) (Methanosarcina frisia).